The primary structure comprises 274 residues: Bis(5'-nucleosyl)-tetraphosphatase, symmetrical (274 aa).

The protein belongs to the Ap4A hydrolase family.

The enzyme catalyses P(1),P(4)-bis(5'-adenosyl) tetraphosphate + H2O = 2 ADP + 2 H(+). Its function is as follows. Hydrolyzes diadenosine 5',5'''-P1,P4-tetraphosphate to yield ADP. The protein is Bis(5'-nucleosyl)-tetraphosphatase, symmetrical of Shewanella baltica (strain OS195).